We begin with the raw amino-acid sequence, 188 residues long: UPF0157 protein VC_A0354 (188 aa).

It belongs to the UPF0157 (GrpB) family.

In Vibrio cholerae serotype O1 (strain ATCC 39315 / El Tor Inaba N16961), this protein is UPF0157 protein VC_A0354.